The primary structure comprises 73 residues: Toxin Td3 (73 aa).

A signal peptide spans 1-7 (IGMVVEC). An LCN-type CS-alpha/beta domain is found at 8–70 (KDGYLMGPDG…VWERATNRCG (63 aa)). 4 disulfides stabilise this stretch: cysteine 18-cysteine 69, cysteine 22-cysteine 44, cysteine 30-cysteine 50, and cysteine 34-cysteine 52. Residue lysine 71 is modified to Lysine amide.

This sequence belongs to the long (4 C-C) scorpion toxin superfamily. Sodium channel inhibitor family. Beta subfamily. Expressed by the venom gland.

It is found in the secreted. In terms of biological role, beta toxins bind voltage-independently at site-4 of sodium channels (Nav) and shift the voltage of activation toward more negative potentials thereby affecting sodium channel activation and promoting spontaneous and repetitive firing. This is Toxin Td3 from Tityus discrepans (Venezuelan scorpion).